The primary structure comprises 112 residues: MTNSDDDLFSEKSTSSDTQQVQNILELEAKIPDILSSAGKCIEAIQLNNSLEDFRKYSKEFLETVEFISTGLRRQALELEKAEVPVVSLQPKKRYASTPLSNLIFDQSSKLM.

This sequence belongs to the Mediator complex subunit 11 family. Component of the Mediator complex, which is composed of at least 21 subunits that form three structurally distinct submodules. The Mediator head module, the middle module, and the tail module. The head and the middle modules interact directly with RNA polymerase II, whereas the elongated tail module interacts with gene-specific regulatory proteins. Med11 is part of the head module. Forms a heterodimer with med22. The med11/22 heterodimer binds to and stabilizes the central head subunit med17.

It is found in the cytoplasm. It localises to the nucleus. Functionally, component of the Mediator complex, a coactivator involved in the regulated transcription of nearly all RNA polymerase II-dependent genes. Mediator functions as a bridge to convey information from gene-specific regulatory proteins to the basal RNA polymerase II transcription machinery. Mediator is recruited to promoters by direct interactions with regulatory proteins and serves as a scaffold for the assembly of a functional pre-initiation complex (PIC) with RNA polymerase II and the general transcription factors. The essential med11/22 heterodimer specifically functions in promoting stable PIC formation. The chain is Mediator of RNA polymerase II transcription subunit 11 (med11) from Schizosaccharomyces pombe (strain 972 / ATCC 24843) (Fission yeast).